A 239-amino-acid polypeptide reads, in one-letter code: Geranylgeranylglyceryl phosphate synthase (239 aa).

Lys13 is a sn-glycerol 1-phosphate binding site. Positions 15 and 42 each coordinate Mg(2+). Sn-glycerol 1-phosphate is bound by residues 162–167, Gly192, and 212–213; these read YIEYSG and GD.

It belongs to the GGGP/HepGP synthase family. Group I subfamily. Mg(2+) is required as a cofactor.

The protein localises to the cytoplasm. It catalyses the reaction sn-glycerol 1-phosphate + (2E,6E,10E)-geranylgeranyl diphosphate = sn-3-O-(geranylgeranyl)glycerol 1-phosphate + diphosphate. Its pathway is membrane lipid metabolism; glycerophospholipid metabolism. Prenyltransferase that catalyzes the transfer of the geranylgeranyl moiety of geranylgeranyl diphosphate (GGPP) to the C3 hydroxyl of sn-glycerol-1-phosphate (G1P). This reaction is the first ether-bond-formation step in the biosynthesis of archaeal membrane lipids. The chain is Geranylgeranylglyceryl phosphate synthase from Haloquadratum walsbyi (strain DSM 16790 / HBSQ001).